A 120-amino-acid chain; its full sequence is MHAFSKIRLTFNQDGPQSHEDDSAGIAVQDAKPTLQAPPMYKVVLFNDDYTPMDFVVEVLEVFFNLNRELATKVMLAVHTEGRAVCGLFTRDIAETKAAQVNQYARESQHPLLCEIEKDG.

It belongs to the ClpS family. As to quaternary structure, binds to the N-terminal domain of the chaperone ClpA.

Functionally, involved in the modulation of the specificity of the ClpAP-mediated ATP-dependent protein degradation. The sequence is that of ATP-dependent Clp protease adapter protein ClpS from Pseudomonas syringae pv. tomato (strain ATCC BAA-871 / DC3000).